Consider the following 703-residue polypeptide: MRRRSTEGTVMTDGSKPTFEIGIAMSGAISAGAYSAGVFDFLIQALDAWEKAKAEGAPDLPEYDVRLKALSGASAGAITAAIGVIAAGGREAPATFPSPAPGSQNIRFTLGRLYRSWVTSPTLVSPDGSPDLLSLEDLAGGRPVISVLNANVLTAIGAEALEATGTLSPRAYVASSLHLYMMLSNLRGVPYAIHFNGGQYNMMTHADRVHYVVEGIGTWKPTPSPFADTDSGTSIAATSLFGAAGASTRPPEWLAFANAALASGAFPIGLSPRVIATATSQYAKAKFPISEDQSELRPIPTWPDAWHVSASQDYPFSFVSVDGGLINNDPFEFVRFTLMKDPPRPNERNAEKADRAVIMIAPFPEGPPFLGDGEPPLGVLSIARRVVTALRQQVRFKPDQLLAVAAEGTHSRFMISPHRVPPSTPGGEEREETFSIASGLLGGFGGFVLEAFRDHDYQLGRRNCQYFLMRHLTIDKNHQTLHWPEGAAERRNAVISKTLSDGSMHDYVPIIPLVGDALPEVPYPRWARIDENAFALLVKRIEARLVAVARRLVSTETTSARMKLGLNFLLLVGRNRIVDYIRLTLLQELVMRDQIEGWPLPAADLRPDFVRAVLAALLDPAFDLRTEAGIARTTKLDTSLVREILSTLAGAAGANCQVWLAPWTRTDEPSLYTLVSRRPSFLATLLQGRSPARLFAKPVVDRK.

The next 4 membrane-spanning stretches (helical) occupy residues 23–43 (IAMS…DFLI), 69–89 (ALSG…AAGG), 143–163 (PVIS…ALEA), and 250–270 (PPEW…PIGL). The PNPLA domain maps to 23-335 (IAMSGAISAG…INNDPFEFVR (313 aa)). The GXSXG motif lies at 72-76 (GASAG). Serine 74 serves as the catalytic Nucleophile. The active-site Proton acceptor is the aspartate 322. The DGA/G signature appears at 322–324 (DGG). The next 3 membrane-spanning stretches (helical) occupy residues 357–377 (VIMI…EPPL), 432–452 (ETFS…LEAF), and 644–664 (ILST…APWT).

The protein resides in the cell membrane. This is an uncharacterized protein from Sinorhizobium fredii (strain NBRC 101917 / NGR234).